The chain runs to 242 residues: Small ribosomal subunit protein eS1 (242 aa).

The protein belongs to the eukaryotic ribosomal protein eS1 family. As to quaternary structure, component of the small ribosomal subunit. Mature ribosomes consist of a small (40S) and a large (60S) subunit. The 40S subunit contains about 33 different proteins and 1 molecule of RNA (18S). The 60S subunit contains about 49 different proteins and 3 molecules of RNA (25S, 5.8S and 5S).

The protein localises to the cytoplasm. The chain is Small ribosomal subunit protein eS1 from Lodderomyces elongisporus (strain ATCC 11503 / CBS 2605 / JCM 1781 / NBRC 1676 / NRRL YB-4239) (Yeast).